The chain runs to 373 residues: MPVVKMLKQVASRTLGSPACGCQPPTLPRRFLGTSPRQIPADANFHSTSFSEANQPRVLITGGLGQLGVGLASLLRKRFGKDNVILSDIRKPPEHVFLSGPFIYSDILDYKNLREIVVNNRVTWLFHYSALLSAVGEANVSLARAVNITGLHNVLDVAAEHGLRLFVPSTIGAFGPTSPRNPTPDLCIQRPRTIYGVSKVHAELMGEYYYYRYGLDFRCLRYPGIISADSQPGGGTTDYAVQIFQDAVKNGRFECNLNPGTKLPMMYIDDCLRATLEVMEAPAEALSLRTYNVNAMSFTPAELAQEVLKHIPEFQITYNVDSVRQAIADSWPMNFDDSTARRDWGWKHDFDLPELVTTMLNFHGAHSRVAQAN.

NAD(+)-binding positions include 62–67 (GGLGQL), 88–90 (DIR), 106–107 (DI), Y195, K199, and I225. Y195 serves as the catalytic Proton donor/acceptor.

It belongs to the NAD(P)-dependent epimerase/dehydratase family. As to quaternary structure, homodimer.

The protein resides in the mitochondrion. The catalysed reaction is L-threonine + NAD(+) = (2S)-2-amino-3-oxobutanoate + NADH + H(+). It functions in the pathway amino-acid degradation; L-threonine degradation via oxydo-reductase pathway; glycine from L-threonine: step 1/2. In terms of biological role, catalyzes the NAD(+)-dependent oxidation of L-threonine to 2-amino-3-ketobutyrate, mediating L-threonine catabolism. The polypeptide is L-threonine 3-dehydrogenase, mitochondrial (Sus scrofa (Pig)).